A 171-amino-acid chain; its full sequence is Putative metal-dependent hydrolase BH0277 (171 aa).

Residues histidine 64, histidine 155, and histidine 159 each contribute to the Zn(2+) site.

It belongs to the metal hydrolase YfiT family. Homodimer. It depends on Zn(2+) as a cofactor.

The protein resides in the cytoplasm. Its function is as follows. Possible metal-dependent hydrolase. The sequence is that of Putative metal-dependent hydrolase BH0277 from Halalkalibacterium halodurans (strain ATCC BAA-125 / DSM 18197 / FERM 7344 / JCM 9153 / C-125) (Bacillus halodurans).